Reading from the N-terminus, the 137-residue chain is Small ribosomal subunit protein bS6 (137 aa).

Residues 96-137 (VTEQSIMLKQKEERAERAPRRDDREERAPRREEEAKPEAAAE) form a disordered region. Residues 104-137 (KQKEERAERAPRRDDREERAPRREEEAKPEAAAE) show a composition bias toward basic and acidic residues.

It belongs to the bacterial ribosomal protein bS6 family.

Functionally, binds together with bS18 to 16S ribosomal RNA. This Vibrio atlanticus (strain LGP32) (Vibrio splendidus (strain Mel32)) protein is Small ribosomal subunit protein bS6.